Consider the following 410-residue polypeptide: Multidrug resistance protein MdtM (410 aa).

The Cytoplasmic portion of the chain corresponds to 1-11 (MPRFFARHAAT). The helical transmembrane segment at 12–32 (LFFPMALILYDFAAYLSTDLI) threads the bilayer. Topologically, residues 33 to 48 (QPGIINVVRDFNADVS) are periplasmic. The chain crosses the membrane as a helical span at residues 49–69 (LAPAAVSLYLAGGMALQWLLG). Topologically, residues 70–78 (PLSDRIGRK) are cytoplasmic. The helical transmembrane segment at 79–99 (PVLITGALIFTLACAATMFTT) threads the bilayer. Residues 100-103 (SMTQ) lie on the Periplasmic side of the membrane. The chain crosses the membrane as a helical span at residues 104–124 (FLIARAIQGTSICFIATVGYV). Residues 125–140 (TVQEAFGQTKGIKLMA) are Cytoplasmic-facing. Residues 141-161 (IITSIVLIAPIIGPLSGAALM) traverse the membrane as a helical segment. Residues 162–167 (HFVHWK) lie on the Periplasmic side of the membrane. The helical transmembrane segment at 168 to 188 (VLFAIIAVMGFISFVGLLLAM) threads the bilayer. Over 189 to 216 (PETVKRGAVPFSAKSVLRDFRNVFCNRL) the chain is Cytoplasmic. Residues 217–237 (FLFGAATISLSYIPMMSWVAV) traverse the membrane as a helical segment. At 238–251 (SPVILIDAGGLTTS) the chain is on the periplasmic side. Residues 252–272 (QFAWTQVPVFGAVIVANAIVA) form a helical membrane-spanning segment. Topologically, residues 273–282 (RFVKDPTEPR) are cytoplasmic. A helical membrane pass occupies residues 283-303 (FIWRAVPIQLVGLALLIIGNL). The Periplasmic segment spans residues 304–307 (LSPH). Residues 308–328 (VWLWSVLGTSLYAFGIGLIFP) form a helical membrane-spanning segment. The Cytoplasmic portion of the chain corresponds to 329-348 (TLFRFTLFSNNLPKGTVSAS). The helical transmembrane segment at 349 to 369 (LNMVILMVMSVSVEIGRWLWF) threads the bilayer. Residues 370–373 (NGGR) lie on the Periplasmic side of the membrane. Residues 374–394 (LPFHLLAVVAGVIVVFTLAGL) traverse the membrane as a helical segment. The Cytoplasmic portion of the chain corresponds to 395-410 (LNRVRQHQAAELAEEQ).

Belongs to the major facilitator superfamily.

The protein resides in the cell inner membrane. Proton-dependent efflux pump. Confers resistance to a broad spectrum of chemically unrelated substrates. This chain is Multidrug resistance protein MdtM (mdtM), found in Escherichia coli O157:H7.